The primary structure comprises 70 residues: MGAIAAGIAMAGAAIGGGVGDGIVISKMLEGMARQPELSGQLRTNMFIGVGLVEAMPIIAFVVALMVMNK.

2 helical membrane passes run I4–V24 and F47–V67.

It belongs to the ATPase C chain family. As to quaternary structure, F-type ATPases have 2 components, F(1) - the catalytic core - and F(0) - the membrane proton channel. F(1) has five subunits: alpha(3), beta(3), gamma(1), delta(1), epsilon(1). F(0) has three main subunits: a(1), b(2) and c(10-14). The alpha and beta chains form an alternating ring which encloses part of the gamma chain. F(1) is attached to F(0) by a central stalk formed by the gamma and epsilon chains, while a peripheral stalk is formed by the delta and b chains.

The protein localises to the cell membrane. Functionally, f(1)F(0) ATP synthase produces ATP from ADP in the presence of a proton or sodium gradient. F-type ATPases consist of two structural domains, F(1) containing the extramembraneous catalytic core and F(0) containing the membrane proton channel, linked together by a central stalk and a peripheral stalk. During catalysis, ATP synthesis in the catalytic domain of F(1) is coupled via a rotary mechanism of the central stalk subunits to proton translocation. Its function is as follows. Key component of the F(0) channel; it plays a direct role in translocation across the membrane. A homomeric c-ring of between 10-14 subunits forms the central stalk rotor element with the F(1) delta and epsilon subunits. The sequence is that of ATP synthase subunit c from Levilactobacillus brevis (strain ATCC 367 / BCRC 12310 / CIP 105137 / JCM 1170 / LMG 11437 / NCIMB 947 / NCTC 947) (Lactobacillus brevis).